Consider the following 583-residue polypeptide: Radixin (583 aa).

An FERM domain is found at 5–295 (INVRVTTMDA…GNHELYMRRR (291 aa)). Residue 60-63 (KLNK) coordinates a 1,2-diacyl-sn-glycero-3-phospho-(1D-myo-inositol). Residue lysine 83 is modified to N6-succinyllysine. Residue lysine 278 participates in a 1,2-diacyl-sn-glycero-3-phospho-(1D-myo-inositol) binding. Disordered regions lie at residues 309–336 (AREE…AEKE), 374–407 (ELDQ…AKQA), and 460–526 (KEEL…RVKK). Positions 374–400 (ELDQERKRAKEEAERLEKERQAAEEAK) are enriched in basic and acidic residues. Positions 469–480 (APPPPPPPPVIP) are enriched in pro residues. 2 stretches are compositionally biased toward basic and acidic residues: residues 483-492 (ENEHDEHDEN) and 506-525 (MNHR…ERVK). Phosphothreonine; by ROCK2 is present on threonine 564.

Interacts with CPNE1 (via VWFA domain) and CPNE4 (via VWFA domain). Binds NHERF1. Interacts with NHERF1, NHERF2, LAYN, MME/NEP and ICAM2. Interacts (via FERM domain) with SPN/CD43 cytoplasmic tail. Interacts with CD44. Interacts with CLIC5; may work together in a complex which also includes EZR and MYO6 to stabilize linkages between the plasma membrane and subjacent actin cytoskeleton at the base of stereocilia. Post-translationally, phosphorylated by tyrosine-protein kinases. Phosphorylation by ROCK2 suppresses the head-to-tail association of the N-terminal and C-terminal halves resulting in an opened conformation which is capable of actin and membrane-binding.

The protein localises to the cell membrane. It localises to the cytoplasm. Its subcellular location is the cytoskeleton. It is found in the cleavage furrow. The protein resides in the cell projection. The protein localises to the microvillus. It localises to the stereocilium. With respect to regulation, a head-to-tail association, of the N-terminal and C-terminal halves results in a closed conformation (inactive form) which is incapable of actin or membrane-binding. Its function is as follows. Probably plays a crucial role in the binding of the barbed end of actin filaments to the plasma membrane. This is Radixin (RDX) from Bos taurus (Bovine).